The primary structure comprises 352 residues: Isopentenyl-diphosphate delta-isomerase (352 aa).

6–7 (RK) lines the substrate pocket. FMN-binding positions include 63–65 (AMT), Ser-93, and Asn-122. Residue 93–95 (SQR) coordinates substrate. Residue Gln-160 coordinates substrate. A Mg(2+)-binding site is contributed by Glu-161. FMN contacts are provided by residues Lys-192, Thr-221, 271–273 (GIR), and 292–293 (SQ).

This sequence belongs to the IPP isomerase type 2 family. As to quaternary structure, homooctamer. Dimer of tetramers. Requires FMN as cofactor. The cofactor is NADPH. Mg(2+) is required as a cofactor.

The protein resides in the cytoplasm. It catalyses the reaction isopentenyl diphosphate = dimethylallyl diphosphate. Its function is as follows. Involved in the biosynthesis of isoprenoids. Catalyzes the 1,3-allylic rearrangement of the homoallylic substrate isopentenyl (IPP) to its allylic isomer, dimethylallyl diphosphate (DMAPP). The protein is Isopentenyl-diphosphate delta-isomerase of Pyrobaculum aerophilum (strain ATCC 51768 / DSM 7523 / JCM 9630 / CIP 104966 / NBRC 100827 / IM2).